Here is a 583-residue protein sequence, read N- to C-terminus: Aspartate--tRNA ligase (583 aa).

Glu174 provides a ligand contact to L-aspartate. Residues 198 to 201 (QITK) are aspartate. Arg220 lines the L-aspartate pocket. ATP-binding positions include 220–222 (RDE) and Gln229. His443 serves as a coordination point for L-aspartate. Glu477 contacts ATP. Arg484 is a binding site for L-aspartate. 529 to 532 (GLDR) is a binding site for ATP.

It belongs to the class-II aminoacyl-tRNA synthetase family. Type 1 subfamily. Homodimer.

It localises to the cytoplasm. It carries out the reaction tRNA(Asp) + L-aspartate + ATP = L-aspartyl-tRNA(Asp) + AMP + diphosphate. In terms of biological role, catalyzes the attachment of L-aspartate to tRNA(Asp) in a two-step reaction: L-aspartate is first activated by ATP to form Asp-AMP and then transferred to the acceptor end of tRNA(Asp). This is Aspartate--tRNA ligase from Streptococcus thermophilus (strain ATCC BAA-250 / LMG 18311).